The chain runs to 399 residues: Chromosomal replication initiator protein DnaA (399 aa).

Residues Met-1–Val-64 form a domain I, interacts with DnaA modulators region. Positions Val-64 to Asp-77 are domain II. The interval Phe-78 to Gly-290 is domain III, AAA+ region. 8 residues coordinate ADP: Ile-89, Asn-94, Gly-122, Thr-123, Gly-124, Lys-125, Thr-126, and His-127. Ile-89 is an ATP binding site. ATP is bound at residue Gly-122. ATP contacts are provided by Gly-124, Lys-125, Thr-126, and His-127. Thr-126 lines the Mg(2+) pocket. Val-156 contacts ssDNA. Position 180 (Asp-180) interacts with ATP. Asp-181 contributes to the Mg(2+) binding site. SsDNA-binding residues include Lys-188, Arg-190, and Thr-191. Arg-277 contacts ATP. The interval Phe-291–Cys-399 is domain IV, binds dsDNA.

Belongs to the DnaA family. As to quaternary structure, in the presence of ATP analog AMP-PCP forms a linear, right-handed spiral filament with 4 subunits arranged head-to-tail, about 122 Angstroms wide and about 360 Angstroms long. Mg(2+)-AMP-PCP binds at the subunit interface with the gamma phosphate coordinated by adjacent subunits. dsDNA probably wraps on the outside of the filament. ssDNA binds to the center of the helical filament via the AAA+ domain, which stretches the DNA.

Its subcellular location is the cytoplasm. Its function is as follows. Plays an essential role in the initiation and regulation of chromosomal replication. ATP-DnaA binds to the origin of replication (oriC) to initiate formation of the DNA replication initiation complex once per cell cycle. Binds the DnaA box (a 9 base pair repeat at the origin) and separates the double-stranded (ds)DNA. Forms a right-handed helical filament on oriC DNA; dsDNA binds to the exterior of the filament while single-stranded (ss)DNA is stabiized in the filament's interior. The ATP-DnaA-oriC complex binds and stabilizes one strand of the AT-rich DNA unwinding element (DUE), permitting loading of DNA polymerase. After initiation quickly degrades to an ADP-DnaA complex that is not apt for DNA replication. Binds acidic phospholipids. Able to melt short unstable dsDNA (15-mer with melting temperature, TM, 43 degrees Celsius) in the presence of a non-hydrolyzable ATP analog; a more stable dsDNA (20-mer, TM 55 degrees Celsius) is poor substrate. ADP does not support dsDNA melting. Addition of DnaA-AMP-PCP (an ATP analog, beta,gamma-methyleneadenosine 5'-triphosphate) to an oric-containing plasmid causes a DNA shift to more positively supercoiled topological species, stabilizing a positive wrap and right-handed filament as seen in the crystal structure without DNA. Filament formation generated by positive supercoiling may destabilize the origin unwinding element through compensatory negative supercoiling strain. The polypeptide is Chromosomal replication initiator protein DnaA (Aquifex aeolicus (strain VF5)).